The chain runs to 690 residues: Kelch-like protein 8 (690 aa).

One can recognise a BTB domain in the interval C111–M178. A BACK domain is found at C213 to V314. 6 Kelch repeats span residues A383–G430, N431–N477, V478–R524, Y525–G571, Y572–G618, and V620–V665.

In terms of assembly, component of the BCR(kel-8) E3 ubiquitin ligase complex, at least composed of cul-3, kel-8 and rbx-1. Interacts with rpy-1. Expressed in neurons.

It localises to the synapse. The protein operates within protein modification; protein ubiquitination. Functionally, substrate-specific adapter of a BCR (BTB-CUL3-RBX1) E3 ubiquitin ligase complex that regulates degradation of glutamate receptors in neurons. The BCR(kel-8) ubiquitin ligase complex mediates ubiquitination and subsequent degradation of rpy-1. Indirectly regulates the protein turnover of glr-1, possibly via ubiquitination and degradation of rpy-1. This chain is Kelch-like protein 8 (kel-8), found in Caenorhabditis elegans.